The following is a 226-amino-acid chain: uncharacterized protein (226 aa).

It belongs to the HisA/HisF family.

This is an uncharacterized protein from Methanocaldococcus jannaschii (strain ATCC 43067 / DSM 2661 / JAL-1 / JCM 10045 / NBRC 100440) (Methanococcus jannaschii).